The following is a 421-amino-acid chain: Gamma-glutamyl phosphate reductase (421 aa).

This sequence belongs to the gamma-glutamyl phosphate reductase family.

It is found in the cytoplasm. The enzyme catalyses L-glutamate 5-semialdehyde + phosphate + NADP(+) = L-glutamyl 5-phosphate + NADPH + H(+). It functions in the pathway amino-acid biosynthesis; L-proline biosynthesis; L-glutamate 5-semialdehyde from L-glutamate: step 2/2. Functionally, catalyzes the NADPH-dependent reduction of L-glutamate 5-phosphate into L-glutamate 5-semialdehyde and phosphate. The product spontaneously undergoes cyclization to form 1-pyrroline-5-carboxylate. The sequence is that of Gamma-glutamyl phosphate reductase from Acinetobacter baumannii (strain SDF).